A 146-amino-acid chain; its full sequence is Hemoglobin subunit beta (146 aa).

Positions 2 to 146 (QWTAEEKQLI…VAHALARKYH (145 aa)) constitute a Globin domain. Positions 63 and 92 each coordinate heme b.

Belongs to the globin family. As to quaternary structure, heterotetramer of two alpha chains and two beta chains. In terms of tissue distribution, red blood cells.

Its function is as follows. Involved in oxygen transport from the lung to the various peripheral tissues. This chain is Hemoglobin subunit beta (HBB), found in Passer montanus (Eurasian tree sparrow).